We begin with the raw amino-acid sequence, 73 residues long: Putative membrane protein insertion efficiency factor (73 aa).

The protein belongs to the UPF0161 family.

Its subcellular location is the cell inner membrane. In terms of biological role, could be involved in insertion of integral membrane proteins into the membrane. The sequence is that of Putative membrane protein insertion efficiency factor from Dinoroseobacter shibae (strain DSM 16493 / NCIMB 14021 / DFL 12).